The following is an 83-amino-acid chain: U5-theraphotoxin-Hs1b 1 (83 aa).

An N-terminal signal peptide occupies residues 1 to 21 (MKTSMFLTLTGLVLLFVVCYA). Positions 22–49 (SESEEKEFPKELLSSIFAADSDFKEEER) are excised as a propeptide. 3 cysteine pairs are disulfide-bonded: C51–C63, C56–C68, and C62–C75.

The protein belongs to the neurotoxin 10 (Hwtx-1) family. 51 (Hntx-8) subfamily. Hntx-8 sub-subfamily. In terms of tissue distribution, expressed by the venom gland.

The protein localises to the secreted. Its function is as follows. Weakly inhibits 5HT3A receptors and Kv1.3/KCNA3 voltage-gated potassium channels. Agglutinates erythrocytes. This Cyriopagopus schmidti (Chinese bird spider) protein is U5-theraphotoxin-Hs1b 1.